The primary structure comprises 227 residues: ATP synthase F(0) complex subunit a (227 aa).

6 helical membrane passes run 12 to 32 (PCLLGIPLILPSLLLPALLLP), 69 to 89 (WALLLTSLILMLLSINLLGLL), 98 to 118 (QLSMNMALALPLWLATLLTGL), 139 to 159 (IPALIMIETTSLLIRPLALGV), 170 to 190 (LLIQLISTATIALLPMMPSIS), and 196 to 216 (ILFLLTILEVAVAMIQAYVFV).

It belongs to the ATPase A chain family. As to quaternary structure, component of the ATP synthase complex composed at least of ATP5F1A/subunit alpha, ATP5F1B/subunit beta, ATP5MC1/subunit c (homooctomer), MT-ATP6/subunit a, MT-ATP8/subunit 8, ATP5ME/subunit e, ATP5MF/subunit f, ATP5MG/subunit g, ATP5MK/subunit k, ATP5MJ/subunit j, ATP5F1C/subunit gamma, ATP5F1D/subunit delta, ATP5F1E/subunit epsilon, ATP5PF/subunit F6, ATP5PB/subunit b, ATP5PD/subunit d, ATP5PO/subunit OSCP. ATP synthase complex consists of a soluble F(1) head domain (subunits alpha(3) and beta(3)) - the catalytic core - and a membrane F(0) domain - the membrane proton channel (subunits c, a, 8, e, f, g, k and j). These two domains are linked by a central stalk (subunits gamma, delta, and epsilon) rotating inside the F1 region and a stationary peripheral stalk (subunits F6, b, d, and OSCP). Interacts with DNAJC30; interaction is direct.

The protein resides in the mitochondrion inner membrane. The catalysed reaction is H(+)(in) = H(+)(out). Subunit a, of the mitochondrial membrane ATP synthase complex (F(1)F(0) ATP synthase or Complex V) that produces ATP from ADP in the presence of a proton gradient across the membrane which is generated by electron transport complexes of the respiratory chain. ATP synthase complex consist of a soluble F(1) head domain - the catalytic core - and a membrane F(1) domain - the membrane proton channel. These two domains are linked by a central stalk rotating inside the F(1) region and a stationary peripheral stalk. During catalysis, ATP synthesis in the catalytic domain of F(1) is coupled via a rotary mechanism of the central stalk subunits to proton translocation. With the subunit c (ATP5MC1), forms the proton-conducting channel in the F(0) domain, that contains two crucial half-channels (inlet and outlet) that facilitate proton movement from the mitochondrial intermembrane space (IMS) into the matrix. Protons are taken up via the inlet half-channel and released through the outlet half-channel, following a Grotthuss mechanism. In Gallus gallus (Chicken), this protein is ATP synthase F(0) complex subunit a.